The following is an 87-amino-acid chain: Kappa 1a-bungarotoxin (87 aa).

An N-terminal signal peptide occupies residues 1 to 21 (MKTLLLTLVVVTIVCLDLGYT). Disulfide bonds link cysteine 24–cysteine 42, cysteine 35–cysteine 63, cysteine 48–cysteine 52, cysteine 67–cysteine 79, and cysteine 80–cysteine 85.

The protein belongs to the three-finger toxin family. Long-chain subfamily. Kappa-neurotoxin sub-subfamily. As to quaternary structure, homo- and heterodimer; non-covalently linked. As to expression, expressed by the venom gland.

The protein resides in the secreted. Its function is as follows. Postsynaptic neurotoxin that binds and inhibits neuronal nicotinic acetylcholine receptors (nAChR) with high affinity (IC(50)&lt;100 nM). Is a selective, and slowly reversible antagonist of alpha-3/CHRNA3-containing and some alpha-4/CHRNA4-containing AChRs. The polypeptide is Kappa 1a-bungarotoxin (Bungarus candidus (Malayan krait)).